The sequence spans 995 residues: MEKTDAKDQSSQGDEEKDPPKSHPYSVETPYGFHLDLDFLKYVDDIEKGNTIKRIPIHRRAKQAKFSTLPRNFSLPDSGARPPAAPPLQNWSPVVPREASLGTQEQNQSPPLGNAPQASTSRSEVSYHRKALLAEATRQLEAAEPEDAELTFGSGRPQLLRASSMPATLLHSRASEEPGLSLGPPAPPALPPLQGEGSVCDGTFEPAEGLAGFHSSSPRASTRIPELVQEGAEPPEGVVKVPNHLPLPGPPFSFQNVLVVLEDKEDEHNAREAEVLFTPGSPTPSPPPLPSPIPENELLLEEIELNISEIPPPPPVEVDMRSIGIRVTEESLGLARVDPGSISSLKQQVSALEGELSGRTEELAQVRTALQQQEEEIKAREQRIRELEFTVAQLEGQFHQENAKDTQGQTDVMVNTDPVHGLLTRESCDKGIEVNLLGSMESESWGHRGEENGLLWGPDGHKQGNQSPAERVLLPQLSLPQGPEQVLTSSVHSFLSTELRIEEAGTEQEGGPQGGTRGAGGFLWGSDRKTPPAGREETSSNLPGKEHPGRPPSSPTDATIGQYVKKIQELLQEQWNCLEHGYPELASAIKQPASKLSSIQSQLLSSLNLLLSAYSAQAHPPKEPPASSSSPPVEISPSTSLKSIMKKKDYGFRAGGNGTKKNLQFVGVNGGYETTSSEETSGEDSTPEDLSDSEAEKKCDGPDHKHVKDAHLTCEAGQGIPEGTCHAAQESGPGEEVPHSKAERYKPSEEFLNACRALSQHLPETGTTTDQLLRQSLNTISQEWFRVSSRKSSSPAVVASYLHEVQPHSPHFLKLLVNLADHNGNTALHYSVSHSNFSIVKLLLETGVCNVDHQNKAGYTAVMITPLASAETNEDMAVVWKLLREGNVNIQATQGGQTALMLGVSHDREDMVQALLSCQADVNLQDHDGSSALMVACHHGNVDLVRLLLAHPACDSSLTDKAGRTALSIALKSPTHMEIAGLLRAHAEQGRSLGL.

Disordered regions lie at residues 1-29 (MEKTDAKDQSSQGDEEKDPPKSHPYSVET) and 68-127 (TLPR…EVSY). The span at 101–124 (LGTQEQNQSPPLGNAPQASTSRSE) shows a compositional bias: polar residues. The stretch at 343-404 (SSLKQQVSAL…EGQFHQENAK (62 aa)) forms a coiled coil. 5 disordered regions span residues 443–467 (ESWGHRGEENGLLWGPDGHKQGNQS), 503–558 (EAGT…PTDA), 617–642 (QAHPPKEPPASSSSPPVEISPSTSLK), 663–705 (LQFV…PDHK), and 721–740 (PEGTCHAAQESGPGEEVPHS). The span at 511–523 (GPQGGTRGAGGFL) shows a compositional bias: gly residues. Positions 526–549 (SDRKTPPAGREETSSNLPGKEHPG) are enriched in basic and acidic residues. A compositionally biased stretch (low complexity) spans 625–640 (PASSSSPPVEISPSTS). The span at 680 to 693 (TSGEDSTPEDLSDS) shows a compositional bias: acidic residues. Basic and acidic residues predominate over residues 694-705 (EAEKKCDGPDHK). ANK repeat units follow at residues 823 to 853 (NGNTALHYSVSHSNFSIVKLLLETGVCNVDH), 862 to 890 (VMITPLASAETNEDMAVVWKLLREGNVNI), 895 to 924 (GGQTALMLGVSHDREDMVQALLSCQADVNL), 928 to 958 (DGSSALMVACHHGNVDLVRLLLAHPACDSSL), and 962 to 992 (AGRTALSIALKSPTHMEIAGLLRAHAEQGRS).

Strongly expressed in colon, liver, lung, skeletal muscle and kidney.

Its subcellular location is the cytoplasm. In terms of biological role, may be involved in the control of cytoskeleton formation by regulating actin polymerization. The protein is KN motif and ankyrin repeat domain-containing protein 4 (KANK4) of Homo sapiens (Human).